A 352-amino-acid chain; its full sequence is Protein NDRG4 (352 aa).

Lys-293, Ser-298, Ser-317, and Ser-323 each carry phosphoserine. Residues 301 to 352 (AVPSASMTRLARSRTASLTSASSVDGSRPQPCAHSDSSEGMGQVNHTMEVSC) are disordered. Residues 308 to 323 (TRLARSRTASLTSASS) are compositionally biased toward low complexity. A compositionally biased stretch (polar residues) spans 338 to 352 (SEGMGQVNHTMEVSC).

Belongs to the NDRG family. As to expression, predominantly expressed in the brain (at protein level). Detected in neurons of various parts of brain, including the olfactory bulb, olfactory tuberculum, cerebral cortex, striatum, hippocampus, dentate gyrus, thalamus, hypothalamus, mesencephalon, cerebellum, pons and medulla oblongata.

The protein localises to the cytoplasm. It is found in the cytosol. Functionally, contributes to the maintenance of intracerebral BDNF levels within the normal range, which is necessary for the preservation of spatial learning and the resistance to neuronal cell death caused by ischemic stress. May enhance growth factor-induced ERK1 and ERK2 phosphorylation. May attenuate NGF-promoted ELK1 phosphorylation in a microtubule-dependent manner. The protein is Protein NDRG4 (Ndrg4) of Mus musculus (Mouse).